Reading from the N-terminus, the 193-residue chain is dCTP deaminase (193 aa).

Residues 110 to 115 (RSSLAR), D128, 136 to 138 (VLE), Y171, K178, and Q182 each bind dCTP. The Proton donor/acceptor role is filled by E138. The segment at 169 to 193 (RPYNSRQDAKYKGQQGAVASRIDKD) is disordered.

It belongs to the dCTP deaminase family. Homotrimer.

The enzyme catalyses dCTP + H2O + H(+) = dUTP + NH4(+). The protein operates within pyrimidine metabolism; dUMP biosynthesis; dUMP from dCTP (dUTP route): step 1/2. Catalyzes the deamination of dCTP to dUTP. This chain is dCTP deaminase, found in Erwinia tasmaniensis (strain DSM 17950 / CFBP 7177 / CIP 109463 / NCPPB 4357 / Et1/99).